Consider the following 185-residue polypeptide: HTH-type transcriptional regulator SA2364 (185 aa).

An HTH tetR-type domain is found at 6–66 (KENRQRIEEI…YVIQRDLDIF (61 aa)). A DNA-binding region (H-T-H motif) is located at residues 29-48 (SMNRIAKELGIGMGTLYRHF).

In Staphylococcus aureus (strain N315), this protein is HTH-type transcriptional regulator SA2364.